Consider the following 445-residue polypeptide: Trigger factor (445 aa).

The region spanning 166–251 (GDVVVVDFVG…AKALKRPVDV (86 aa)) is the PPIase FKBP-type domain.

It belongs to the FKBP-type PPIase family. Tig subfamily.

The protein resides in the cytoplasm. The enzyme catalyses [protein]-peptidylproline (omega=180) = [protein]-peptidylproline (omega=0). Its function is as follows. Involved in protein export. Acts as a chaperone by maintaining the newly synthesized protein in an open conformation. Functions as a peptidyl-prolyl cis-trans isomerase. This chain is Trigger factor, found in Gluconacetobacter diazotrophicus (strain ATCC 49037 / DSM 5601 / CCUG 37298 / CIP 103539 / LMG 7603 / PAl5).